Consider the following 91-residue polypeptide: UPF0213 protein NMC1807 (91 aa).

The region spanning 4–83 (SNWSVYLILC…AAQKRQLWEQ (80 aa)) is the GIY-YIG domain.

It belongs to the UPF0213 family.

This Neisseria meningitidis serogroup C / serotype 2a (strain ATCC 700532 / DSM 15464 / FAM18) protein is UPF0213 protein NMC1807.